We begin with the raw amino-acid sequence, 146 residues long: Catabolic 3-dehydroquinase (146 aa).

The active-site Proton acceptor is tyrosine 24. Substrate contacts are provided by asparagine 78, histidine 84, and aspartate 91. Histidine 104 functions as the Proton donor in the catalytic mechanism. Residues 105-106 (IT) and arginine 115 contribute to the substrate site.

The protein belongs to the type-II 3-dehydroquinase family. In terms of assembly, homododecamer. Adopts a ring-like structure, composed of an arrangement of two hexameric rings stacked on top of one another.

It carries out the reaction 3-dehydroquinate = 3-dehydroshikimate + H2O. Its pathway is aromatic compound metabolism; 3,4-dihydroxybenzoate biosynthesis; 3,4-dihydroxybenzoate from 3-dehydroquinate: step 1/2. Functionally, is involved in the catabolism of quinate. Allows the utilization of quinate as carbon source via the beta-ketoadipate pathway. This Candida albicans (strain SC5314 / ATCC MYA-2876) (Yeast) protein is Catabolic 3-dehydroquinase.